The following is a 163-amino-acid chain: Putative pre-16S rRNA nuclease (163 aa).

This sequence belongs to the YqgF nuclease family.

It localises to the cytoplasm. Its function is as follows. Could be a nuclease involved in processing of the 5'-end of pre-16S rRNA. This Roseobacter denitrificans (strain ATCC 33942 / OCh 114) (Erythrobacter sp. (strain OCh 114)) protein is Putative pre-16S rRNA nuclease.